A 230-amino-acid polypeptide reads, in one-letter code: RING finger protein 141 (230 aa).

A lipid anchor (N-myristoyl glycine) is attached at Gly-2. The RING-type zinc-finger motif lies at 155–192 (CCICMDGRADLILPCAHSFCQKCIDKWSDRHRNCPICR).

It is found in the membrane. In terms of biological role, may be involved in spermatogenesis. The protein is RING finger protein 141 (RNF141) of Pongo abelii (Sumatran orangutan).